Consider the following 98-residue polypeptide: Aspartyl/glutamyl-tRNA(Asn/Gln) amidotransferase subunit C (98 aa).

The protein belongs to the GatC family. Heterotrimer of A, B and C subunits.

The enzyme catalyses L-glutamyl-tRNA(Gln) + L-glutamine + ATP + H2O = L-glutaminyl-tRNA(Gln) + L-glutamate + ADP + phosphate + H(+). It catalyses the reaction L-aspartyl-tRNA(Asn) + L-glutamine + ATP + H2O = L-asparaginyl-tRNA(Asn) + L-glutamate + ADP + phosphate + 2 H(+). Its function is as follows. Allows the formation of correctly charged Asn-tRNA(Asn) or Gln-tRNA(Gln) through the transamidation of misacylated Asp-tRNA(Asn) or Glu-tRNA(Gln) in organisms which lack either or both of asparaginyl-tRNA or glutaminyl-tRNA synthetases. The reaction takes place in the presence of glutamine and ATP through an activated phospho-Asp-tRNA(Asn) or phospho-Glu-tRNA(Gln). This is Aspartyl/glutamyl-tRNA(Asn/Gln) amidotransferase subunit C from Bifidobacterium adolescentis (strain ATCC 15703 / DSM 20083 / NCTC 11814 / E194a).